We begin with the raw amino-acid sequence, 592 residues long: A-type ATP synthase subunit A (592 aa).

236-243 (GPFGSGKT) is a binding site for ATP.

Belongs to the ATPase alpha/beta chains family. In terms of assembly, has multiple subunits with at least A(3), B(3), C, D, E, F, H, I and proteolipid K(x).

It is found in the cell membrane. It catalyses the reaction ATP + H2O + 4 H(+)(in) = ADP + phosphate + 5 H(+)(out). Component of the A-type ATP synthase that produces ATP from ADP in the presence of a proton gradient across the membrane. The A chain is the catalytic subunit. The polypeptide is A-type ATP synthase subunit A (Methanopyrus kandleri (strain AV19 / DSM 6324 / JCM 9639 / NBRC 100938)).